We begin with the raw amino-acid sequence, 864 residues long: Leucine--tRNA ligase (864 aa).

The 'HIGH' region signature appears at 40-51 (PYPSGAGLHVGH). The 'KMSKS' region signature appears at 636-640 (KMSKS). Residue lysine 639 coordinates ATP.

The protein belongs to the class-I aminoacyl-tRNA synthetase family.

The protein localises to the cytoplasm. The enzyme catalyses tRNA(Leu) + L-leucine + ATP = L-leucyl-tRNA(Leu) + AMP + diphosphate. In Leptospira borgpetersenii serovar Hardjo-bovis (strain JB197), this protein is Leucine--tRNA ligase.